The sequence spans 283 residues: Putative pyruvate, phosphate dikinase regulatory protein (283 aa).

ADP is bound at residue 154–161; that stretch reads GVSRTSKT.

This sequence belongs to the pyruvate, phosphate/water dikinase regulatory protein family. PDRP subfamily.

The catalysed reaction is N(tele)-phospho-L-histidyl/L-threonyl-[pyruvate, phosphate dikinase] + ADP = N(tele)-phospho-L-histidyl/O-phospho-L-threonyl-[pyruvate, phosphate dikinase] + AMP + H(+). It catalyses the reaction N(tele)-phospho-L-histidyl/O-phospho-L-threonyl-[pyruvate, phosphate dikinase] + phosphate + H(+) = N(tele)-phospho-L-histidyl/L-threonyl-[pyruvate, phosphate dikinase] + diphosphate. Functionally, bifunctional serine/threonine kinase and phosphorylase involved in the regulation of the pyruvate, phosphate dikinase (PPDK) by catalyzing its phosphorylation/dephosphorylation. In Afipia carboxidovorans (strain ATCC 49405 / DSM 1227 / KCTC 32145 / OM5) (Oligotropha carboxidovorans), this protein is Putative pyruvate, phosphate dikinase regulatory protein.